The sequence spans 497 residues: Cobyrinate a,c-diamide synthase (497 aa).

Positions 273–478 constitute a GATase cobBQ-type domain; sequence RIGIALDEAF…AHLHGVAYRE (206 aa). Cys-355 serves as the catalytic Nucleophile.

Belongs to the CobB/CbiA family. Requires Mg(2+) as cofactor.

It catalyses the reaction cob(II)yrinate + 2 L-glutamine + 2 ATP + 2 H2O = cob(II)yrinate a,c diamide + 2 L-glutamate + 2 ADP + 2 phosphate + 2 H(+). The enzyme catalyses Ni-sirohydrochlorin + 2 L-glutamine + 2 ATP + 2 H2O = Ni-sirohydrochlorin a,c-diamide + 2 L-glutamate + 2 ADP + 2 phosphate + 2 H(+). The protein operates within cofactor biosynthesis; adenosylcobalamin biosynthesis; cob(II)yrinate a,c-diamide from sirohydrochlorin (anaerobic route): step 10/10. In terms of biological role, catalyzes the ATP-dependent amidation of the two carboxylate groups at positions a and c of cobyrinate, using either L-glutamine or ammonia as the nitrogen source (Potential). Involved in the biosynthesis of the unique nickel-containing tetrapyrrole coenzyme F430, the prosthetic group of methyl-coenzyme M reductase (MCR), which plays a key role in methanogenesis and anaerobic methane oxidation. Catalyzes the ATP-dependent amidation of the two carboxylate groups at positions a and c of Ni-sirohydrochlorin, using L-glutamine or ammonia as the nitrogen source. The polypeptide is Cobyrinate a,c-diamide synthase (Methanosarcina acetivorans (strain ATCC 35395 / DSM 2834 / JCM 12185 / C2A)).